Consider the following 354-residue polypeptide: Peptide chain release factor 1 (354 aa).

Q231 bears the N5-methylglutamine mark.

The protein belongs to the prokaryotic/mitochondrial release factor family. Post-translationally, methylated by PrmC. Methylation increases the termination efficiency of RF1.

Its subcellular location is the cytoplasm. Functionally, peptide chain release factor 1 directs the termination of translation in response to the peptide chain termination codons UAG and UAA. This chain is Peptide chain release factor 1, found in Acholeplasma laidlawii (strain PG-8A).